The sequence spans 141 residues: U-scoloptoxin(17)-Er3a (141 aa).

The first 21 residues, M1–A21, serve as a signal peptide directing secretion.

The protein belongs to the scoloptoxin-17 family. In terms of processing, contains 3 disulfide bonds. In terms of tissue distribution, expressed by the venom gland.

It is found in the secreted. This chain is U-scoloptoxin(17)-Er3a, found in Ethmostigmus rubripes (Giant centipede).